The following is a 250-amino-acid chain: Ubiquinone/menaquinone biosynthesis C-methyltransferase UbiE (250 aa).

S-adenosyl-L-methionine is bound by residues threonine 73, aspartate 94, 122-123 (NA), and serine 139.

The protein belongs to the class I-like SAM-binding methyltransferase superfamily. MenG/UbiE family.

It carries out the reaction a 2-demethylmenaquinol + S-adenosyl-L-methionine = a menaquinol + S-adenosyl-L-homocysteine + H(+). It catalyses the reaction a 2-methoxy-6-(all-trans-polyprenyl)benzene-1,4-diol + S-adenosyl-L-methionine = a 5-methoxy-2-methyl-3-(all-trans-polyprenyl)benzene-1,4-diol + S-adenosyl-L-homocysteine + H(+). It participates in quinol/quinone metabolism; menaquinone biosynthesis; menaquinol from 1,4-dihydroxy-2-naphthoate: step 2/2. Its pathway is cofactor biosynthesis; ubiquinone biosynthesis. Methyltransferase required for the conversion of demethylmenaquinol (DMKH2) to menaquinol (MKH2) and the conversion of 2-polyprenyl-6-methoxy-1,4-benzoquinol (DDMQH2) to 2-polyprenyl-3-methyl-6-methoxy-1,4-benzoquinol (DMQH2). The chain is Ubiquinone/menaquinone biosynthesis C-methyltransferase UbiE from Francisella tularensis subsp. novicida (strain U112).